Here is a 442-residue protein sequence, read N- to C-terminus: 26S proteasome non-ATPase regulatory subunit 12 homolog A (442 aa).

A coiled-coil region spans residues 6-137 (KLEATIDRLL…EAADLMQEVA (132 aa)). Positions 232–403 (EICRSYKAIY…GIVCFQIAKD (172 aa)) constitute a PCI domain.

Belongs to the proteasome subunit p55 family. Component of the 19S regulatory particle (RP/PA700) lid subcomplex of the 26S proteasome. The 26S proteasome is composed of a core protease (CP), known as the 20S proteasome, capped at one or both ends by the 19S regulatory particle (RP/PA700). The RP/PA700 complex is composed of at least 17 different subunits in two subcomplexes, the base and the lid, which form the portions proximal and distal to the 20S proteolytic core, respectively. As to expression, ubiquitous with highest expression in flowers.

Its subcellular location is the cytoplasm. It localises to the nucleus. Acts as a regulatory subunit of the 26 proteasome which is involved in the ATP-dependent degradation of ubiquitinated proteins. Required for gametogenesis and sporophyte development. Acts redundantly with RPN5B. The sequence is that of 26S proteasome non-ATPase regulatory subunit 12 homolog A (RPN5A) from Arabidopsis thaliana (Mouse-ear cress).